We begin with the raw amino-acid sequence, 495 residues long: Trimethylamine methyltransferase MttB1 (495 aa).

Residue pyrrolysine 334 is a non-standard amino acid, pyrrolysine.

This sequence belongs to the trimethylamine methyltransferase family. In terms of assembly, can form a complex with MttC.

The enzyme catalyses Co(I)-[trimethylamine-specific corrinoid protein] + trimethylamine + H(+) = methyl-Co(III)-[trimethylamine-specific corrinoid protein] + dimethylamine. The protein operates within one-carbon metabolism; methanogenesis from trimethylamine. Catalyzes the transfer of a methyl group from trimethylamine to the corrinoid cofactor of MttC. The polypeptide is Trimethylamine methyltransferase MttB1 (mttB1) (Methanosarcina mazei (strain ATCC BAA-159 / DSM 3647 / Goe1 / Go1 / JCM 11833 / OCM 88) (Methanosarcina frisia)).